A 76-amino-acid chain; its full sequence is uncharacterized protein (76 aa).

The helical transmembrane segment at 53–70 threads the bilayer; that stretch reads STKLHIIWFCIFAIFIAV.

It is found in the membrane. This is an uncharacterized protein from Haemophilus influenzae (strain ATCC 51907 / DSM 11121 / KW20 / Rd).